A 779-amino-acid chain; its full sequence is Phosphoribosylformylglycinamidine synthase subunit PurL (779 aa).

His52 is a catalytic residue. Positions 55 and 94 each coordinate ATP. Glu96 provides a ligand contact to Mg(2+). Substrate is bound by residues 97–100 and Arg119; that span reads SHNH. His98 functions as the Proton acceptor in the catalytic mechanism. Asp120 is a Mg(2+) binding site. Gln243 contributes to the substrate binding site. Residue Asp271 participates in Mg(2+) binding. 315-317 serves as a coordination point for substrate; it reads ESQ. Residues Asn523 and Gly560 each contribute to the ATP site. Asn561 contributes to the Mg(2+) binding site. Ser563 contacts substrate.

The protein belongs to the FGAMS family. As to quaternary structure, monomer. Part of the FGAM synthase complex composed of 1 PurL, 1 PurQ and 2 PurS subunits.

It is found in the cytoplasm. The catalysed reaction is N(2)-formyl-N(1)-(5-phospho-beta-D-ribosyl)glycinamide + L-glutamine + ATP + H2O = 2-formamido-N(1)-(5-O-phospho-beta-D-ribosyl)acetamidine + L-glutamate + ADP + phosphate + H(+). It participates in purine metabolism; IMP biosynthesis via de novo pathway; 5-amino-1-(5-phospho-D-ribosyl)imidazole from N(2)-formyl-N(1)-(5-phospho-D-ribosyl)glycinamide: step 1/2. Functionally, part of the phosphoribosylformylglycinamidine synthase complex involved in the purines biosynthetic pathway. Catalyzes the ATP-dependent conversion of formylglycinamide ribonucleotide (FGAR) and glutamine to yield formylglycinamidine ribonucleotide (FGAM) and glutamate. The FGAM synthase complex is composed of three subunits. PurQ produces an ammonia molecule by converting glutamine to glutamate. PurL transfers the ammonia molecule to FGAR to form FGAM in an ATP-dependent manner. PurS interacts with PurQ and PurL and is thought to assist in the transfer of the ammonia molecule from PurQ to PurL. In Prochlorococcus marinus (strain MIT 9515), this protein is Phosphoribosylformylglycinamidine synthase subunit PurL.